Consider the following 498-residue polypeptide: Zinc finger protein 395 (498 aa).

Positions 129 to 165 (QKPLSSPIEQSLPTSPGATSTSAQRSVSRSIDVPKRR) are disordered. The span at 130 to 157 (KPLSSPIEQSLPTSPGATSTSAQRSVSR) shows a compositional bias: polar residues. The short motif at 171–180 (MDEMMAAMVL) is the Nuclear export signal element. A disordered region spans residues 209 to 245 (KEGGDVSDSGSSTTSGHWSASSGVSTPSPPHTDASPK). Residues 214-231 (VSDSGSSTTSGHWSASSG) are compositionally biased toward low complexity. The C2H2-type zinc finger occupies 285–310 (YKCLWPNCGKLLRSIVGIKRHVKTQH).

The protein localises to the cytoplasm. It localises to the nucleus. The protein is Zinc finger protein 395 (znf395) of Xenopus laevis (African clawed frog).